The following is a 117-amino-acid chain: Immunoglobulin heavy variable 4-28 (117 aa).

The signal sequence occupies residues 1–19 (MKHLWFFLLLVAAPRWVLS). Residues 20–44 (QVQLQESGPGLVKPSDTLSLTCAVS) are framework-1. The Ig-like domain occupies 20-117 (QVQLQESGPG…VDTAVYYCAR (98 aa)). Residues Cys41 and Cys115 are joined by a disulfide bond. The complementarity-determining-1 stretch occupies residues 45–53 (GYSISSSNW). The segment at 54–70 (WGWIRQPPGKGLEWIGY) is framework-2. A complementarity-determining-2 region spans residues 71–77 (IYYSGST). The segment at 78–115 (YYNPSLKSRVTMSVDTSKNQFSLKLSSVTAVDTAVYYC) is framework-3. A complementarity-determining-3 region spans residues 116-117 (AR).

As to quaternary structure, immunoglobulins are composed of two identical heavy chains and two identical light chains; disulfide-linked.

It localises to the secreted. It is found in the cell membrane. V region of the variable domain of immunoglobulin heavy chains that participates in the antigen recognition. Immunoglobulins, also known as antibodies, are membrane-bound or secreted glycoproteins produced by B lymphocytes. In the recognition phase of humoral immunity, the membrane-bound immunoglobulins serve as receptors which, upon binding of a specific antigen, trigger the clonal expansion and differentiation of B lymphocytes into immunoglobulins-secreting plasma cells. Secreted immunoglobulins mediate the effector phase of humoral immunity, which results in the elimination of bound antigens. The antigen binding site is formed by the variable domain of one heavy chain, together with that of its associated light chain. Thus, each immunoglobulin has two antigen binding sites with remarkable affinity for a particular antigen. The variable domains are assembled by a process called V-(D)-J rearrangement and can then be subjected to somatic hypermutations which, after exposure to antigen and selection, allow affinity maturation for a particular antigen. The chain is Immunoglobulin heavy variable 4-28 from Homo sapiens (Human).